Consider the following 2275-residue polypeptide: Serine-rich adhesin for platelets (2275 aa).

The first 89 residues, 1–89 (MSKRQKEFHD…VNMLHDQQAF (89 aa)), serve as a signal peptide directing secretion. Residues 90-264 (AASDAPLTSE…TANTITVNKD (175 aa)) are serine-rich repeat region 1, SRR1. A compositionally biased stretch (polar residues) spans 100-111 (LNTQSETVGNQN). Disordered stretches follow at residues 100-229 (LNTQ…STST) and 751-2247 (NSMS…GLLG). Low complexity predominate over residues 112–128 (STTIEASTSTADSTSVT). Polar residues predominate over residues 129–140 (KNSSSVQTSNSD). The segment covering 150–229 (VTSTTNSTSN…NKTSTTSTST (80 aa)) has biased composition (low complexity). Positions 265–751 (NLKQYMTTSG…TTFKYEVTRN (487 aa)) are non-repeat region (NRR). Low complexity-rich tracts occupy residues 752–1392 (SMSD…LSLS) and 1402–2218 (SNSA…ATSE). The tract at residues 752 to 2236 (SMSDSVSTSG…AQSEKRLPDT (1485 aa)) is serine-rich repeat region 2, SRR2. The LPXTG sorting signal signature appears at 2233–2237 (LPDTG). Position 2236 is a pentaglycyl murein peptidoglycan amidated threonine (Thr-2236). Positions 2237 to 2275 (GDSIKQNGLLGGVMTLLVGLGLMKRKKKKDENDQDDSQA) are cleaved as a propeptide — removed by sortase.

The protein belongs to the serine-rich repeat protein (SRRP) family. Interacts with human gp-340 (DMBT1). In terms of processing, proteolytically cleaved by a metalloprotease. Glycosylated. It is probable that most of the Ser residues in SSR1 and SSR2 are O-GlcNAcylated. Sequential glycosylation by sugar transferases are able to generate complex sugar polymorphisms.

Its subcellular location is the secreted. It localises to the cell wall. In terms of biological role, mediates binding to human platelets, possibly through a receptor-ligand interaction. Probably associated with virulence in endovascular infection. Interacts with host (human) gp-340 via the non-repeat region (NRR or binding region). Binding is inhibited by N-acetylneuraminic acid (NeuAc). The sequence is that of Serine-rich adhesin for platelets (sraP) from Staphylococcus aureus (strain MW2).